The chain runs to 201 residues: Lymphotoxin-alpha (201 aa).

A signal peptide spans 1-27 (MTSSGVLCLLGALSLQVLLLQPPGAQG). The segment at 23–52 (PGAQGAPNPDNSHSSSPAPPQTAQHLSQKS) is disordered. The span at 31-51 (PDNSHSSSPAPPQTAQHLSQK) shows a compositional bias: polar residues. The THD domain maps to 60 to 201 (PAAHLVGDPS…SSVFFGAFAL (142 aa)). N-linked (GlcNAc...) asparagine glycosylation occurs at Asn-93. A disulfide bond links Cys-117 and Cys-152.

Belongs to the tumor necrosis factor family. Homotrimer, and heterotrimer of either two LTB and one LTA subunits or (less prevalent) two LTA and one LTB subunits. Interacts with TNFRSF14.

Its subcellular location is the secreted. The protein localises to the membrane. Its function is as follows. Cytokine that in its homotrimeric form binds to TNFRSF1A/TNFR1, TNFRSF1B/TNFBR and TNFRSF14/HVEM. In its heterotrimeric form with LTB binds to TNFRSF3/LTBR. Lymphotoxin is produced by lymphocytes and is cytotoxic for a wide range of tumor cells in vitro and in vivo. The sequence is that of Lymphotoxin-alpha (LTA) from Notamacropus eugenii (Tammar wallaby).